Consider the following 166-residue polypeptide: Urease accessory protein UreE (166 aa).

It belongs to the UreE family.

It localises to the cytoplasm. Its function is as follows. Involved in urease metallocenter assembly. Binds nickel. Probably functions as a nickel donor during metallocenter assembly. The chain is Urease accessory protein UreE from Pseudomonas savastanoi pv. phaseolicola (strain 1448A / Race 6) (Pseudomonas syringae pv. phaseolicola (strain 1448A / Race 6)).